We begin with the raw amino-acid sequence, 298 residues long: ATP phosphoribosyltransferase (298 aa).

It belongs to the ATP phosphoribosyltransferase family. Long subfamily. Requires Mg(2+) as cofactor.

Its subcellular location is the cytoplasm. It carries out the reaction 1-(5-phospho-beta-D-ribosyl)-ATP + diphosphate = 5-phospho-alpha-D-ribose 1-diphosphate + ATP. It participates in amino-acid biosynthesis; L-histidine biosynthesis; L-histidine from 5-phospho-alpha-D-ribose 1-diphosphate: step 1/9. Its activity is regulated as follows. Feedback inhibited by histidine. In terms of biological role, catalyzes the condensation of ATP and 5-phosphoribose 1-diphosphate to form N'-(5'-phosphoribosyl)-ATP (PR-ATP). Has a crucial role in the pathway because the rate of histidine biosynthesis seems to be controlled primarily by regulation of HisG enzymatic activity. The protein is ATP phosphoribosyltransferase (hisG) of Photobacterium profundum (strain SS9).